The sequence spans 270 residues: tRNA pseudouridine synthase B (270 aa).

Asp-49 serves as the catalytic Nucleophile.

The protein belongs to the pseudouridine synthase TruB family. Type 1 subfamily.

It carries out the reaction uridine(55) in tRNA = pseudouridine(55) in tRNA. Functionally, responsible for synthesis of pseudouridine from uracil-55 in the psi GC loop of transfer RNAs. The protein is tRNA pseudouridine synthase B of Bartonella quintana (strain Toulouse) (Rochalimaea quintana).